The following is a 380-amino-acid chain: MAPNLRKSHPLLKMINNSLIDLPTPSNISAWWNFGSLLGLCLVTQILTGLLLATHYTADTTLAFSSVTHTCRNVQYGWLIRNLHANGASFFFICIYLHIGRGLYYGSYLYKETWNTGILLLLTLMATAFVGYVLPWGQMSFWGATVITNLFSAIPYIGQTIVEWAWGGFSVDNPTLTRFFALHFLLPFMIAGLTLIHLTFLHESGSNNPLGLVSNCDKIPFHPYFSLKDTLGFMFMLFLLTTLALFSPNLLGDPENFTPANPLVTPPHIKPEWYFLFAYAILRSIPNKLGGVLALAASVLILFLSPLLHKSKQRTMAFRPFSQFLFWLLIANLLILTWVGSQPVEHPFIIIGQLASLTYFTILLILLPITGALENKMLNY.

Transmembrane regions (helical) follow at residues 34 to 54 (FGSL…LLAT), 78 to 99 (WLIR…YLHI), 114 to 134 (WNTG…GYVL), and 179 to 199 (FFAL…IHLT). Residues histidine 84 and histidine 98 each coordinate heme b. Heme b contacts are provided by histidine 183 and histidine 197. Residue histidine 202 participates in a ubiquinone binding. 4 helical membrane passes run 227–247 (LKDT…ALFS), 289–309 (LGGV…PLLH), 321–341 (FSQF…WVGS), and 348–368 (FIII…ILLP).

It belongs to the cytochrome b family. The cytochrome bc1 complex contains 11 subunits: 3 respiratory subunits (MT-CYB, CYC1 and UQCRFS1), 2 core proteins (UQCRC1 and UQCRC2) and 6 low-molecular weight proteins (UQCRH/QCR6, UQCRB/QCR7, UQCRQ/QCR8, UQCR10/QCR9, UQCR11/QCR10 and a cleavage product of UQCRFS1). This cytochrome bc1 complex then forms a dimer. The cofactor is heme b.

The protein localises to the mitochondrion inner membrane. Component of the ubiquinol-cytochrome c reductase complex (complex III or cytochrome b-c1 complex) that is part of the mitochondrial respiratory chain. The b-c1 complex mediates electron transfer from ubiquinol to cytochrome c. Contributes to the generation of a proton gradient across the mitochondrial membrane that is then used for ATP synthesis. In Garrodia nereis (Grey-backed storm-petrel), this protein is Cytochrome b (MT-CYB).